Here is a 258-residue protein sequence, read N- to C-terminus: MTDDEVQWKPILVGGLSGLVAETLVFPLSTIITRVQSSLSFQQAGGFQHLYRGLSSVLVSTLPSASSFFFVYEYAKARQKPGVRNHLVSASVAEVVSCGILAPAEVVRQRAQISKTSVSQIFQSMIHNYRDLWHSFKGMCGRNVPATAFQFVLYEQFKKKFSATDHVFGAPKGAALSGAITAAVLTPLDVIKTQINLRPESYRKVVRRIYKENGIFGFEKGLGLRVFASSLGLSIYLGTYEHVKSHLHIRKAGEVSVA.

3 Solcar repeats span residues 9-78 (KPIL…AKAR), 81-160 (PGVR…FKKK), and 165-246 (DHVF…VKSH). 6 helical membrane-spanning segments follow: residues 11–31 (ILVG…LSTI), 53–73 (GLSS…FVYE), 87–107 (LVSA…AEVV), 139–159 (MCGR…QFKK), 171–191 (PKGA…LDVI), and 218–239 (FEKG…YLGT).

Belongs to the mitochondrial carrier (TC 2.A.29) family.

It localises to the mitochondrion inner membrane. This is an uncharacterized protein from Schizosaccharomyces pombe (strain 972 / ATCC 24843) (Fission yeast).